A 176-amino-acid chain; its full sequence is Crossover junction endodeoxyribonuclease RuvC (176 aa).

Catalysis depends on residues aspartate 7, glutamate 68, and aspartate 141. Mg(2+) contacts are provided by aspartate 7, glutamate 68, and aspartate 141.

This sequence belongs to the RuvC family. Homodimer which binds Holliday junction (HJ) DNA. The HJ becomes 2-fold symmetrical on binding to RuvC with unstacked arms; it has a different conformation from HJ DNA in complex with RuvA. In the full resolvosome a probable DNA-RuvA(4)-RuvB(12)-RuvC(2) complex forms which resolves the HJ. It depends on Mg(2+) as a cofactor.

Its subcellular location is the cytoplasm. The catalysed reaction is Endonucleolytic cleavage at a junction such as a reciprocal single-stranded crossover between two homologous DNA duplexes (Holliday junction).. Functionally, the RuvA-RuvB-RuvC complex processes Holliday junction (HJ) DNA during genetic recombination and DNA repair. Endonuclease that resolves HJ intermediates. Cleaves cruciform DNA by making single-stranded nicks across the HJ at symmetrical positions within the homologous arms, yielding a 5'-phosphate and a 3'-hydroxyl group; requires a central core of homology in the junction. The consensus cleavage sequence is 5'-(A/T)TT(C/G)-3'. Cleavage occurs on the 3'-side of the TT dinucleotide at the point of strand exchange. HJ branch migration catalyzed by RuvA-RuvB allows RuvC to scan DNA until it finds its consensus sequence, where it cleaves and resolves the cruciform DNA. The chain is Crossover junction endodeoxyribonuclease RuvC from Streptomyces avermitilis (strain ATCC 31267 / DSM 46492 / JCM 5070 / NBRC 14893 / NCIMB 12804 / NRRL 8165 / MA-4680).